The sequence spans 464 residues: UDP-N-acetylmuramate--L-alanine ligase (464 aa).

111–117 (GAHGKTT) provides a ligand contact to ATP.

It belongs to the MurCDEF family.

The protein resides in the cytoplasm. It carries out the reaction UDP-N-acetyl-alpha-D-muramate + L-alanine + ATP = UDP-N-acetyl-alpha-D-muramoyl-L-alanine + ADP + phosphate + H(+). Its pathway is cell wall biogenesis; peptidoglycan biosynthesis. Functionally, cell wall formation. The chain is UDP-N-acetylmuramate--L-alanine ligase from Dictyoglomus turgidum (strain DSM 6724 / Z-1310).